The chain runs to 422 residues: uncharacterized protein (422 aa).

Disordered stretches follow at residues 1–21, 158–218, and 246–271; these read MRDN…TTYD, TAKS…TEQV, and DFGT…PWLT. Residues 11–21 are compositionally biased toward polar residues; that stretch reads AGSNTQQTTYD. The span at 170-199 shows a compositional bias: low complexity; sequence SKSSNGSSSTSTTQRGGSSNENKVKALQVA. Polar residues-rich tracts occupy residues 205–216 and 250–261; these read GSQGNSGDQGTE and APSSSGSGTQDG. The segment covering 262-271 has biased composition (low complexity); sequence TPTPWTPWLT.

Belongs to the adhesin P1 family.

This is an uncharacterized protein from Mycoplasma pneumoniae (strain ATCC 29342 / M129 / Subtype 1) (Mycoplasmoides pneumoniae).